An 870-amino-acid chain; its full sequence is Eukaryotic translation initiation factor 3 subunit C (870 aa).

Residues 1–92 (MSRFFRGDSS…GVKVVKSAKN (92 aa)) form a disordered region. A compositionally biased stretch (acidic residues) spans 14–54 (SSDEEEDLYSDDEEVQEQPEEESEEDDSEEDDDDDDSDSSS). In terms of domain architecture, PCI spans 608–782 (FHMHINLELL…SSIIFRKGVE (175 aa)). The tract at residues 807–870 (TLETRTQGTA…ALGAAVGSRA (64 aa)) is disordered. Gly residues predominate over residues 824 to 844 (GRGGRGGNRGGRGGNRGGRGG).

This sequence belongs to the eIF-3 subunit C family. Component of the eukaryotic translation initiation factor 3 (eIF-3) complex.

The protein resides in the cytoplasm. Its function is as follows. Component of the eukaryotic translation initiation factor 3 (eIF-3) complex, which is involved in protein synthesis of a specialized repertoire of mRNAs and, together with other initiation factors, stimulates binding of mRNA and methionyl-tRNAi to the 40S ribosome. The eIF-3 complex specifically targets and initiates translation of a subset of mRNAs involved in cell proliferation. This Sclerotinia sclerotiorum (strain ATCC 18683 / 1980 / Ss-1) (White mold) protein is Eukaryotic translation initiation factor 3 subunit C (nip1).